Reading from the N-terminus, the 228-residue chain is 2,3-bisphosphoglycerate-dependent phosphoglycerate mutase (228 aa).

Residues 8–15 (RHGQSEWN), 21–22 (TG), Arg-60, 87–90 (ERHY), Lys-98, 114–115 (RR), and 183–184 (GN) contribute to the substrate site. The active-site Tele-phosphohistidine intermediate is the His-9. Residue Glu-87 is the Proton donor/acceptor of the active site.

It belongs to the phosphoglycerate mutase family. BPG-dependent PGAM subfamily.

It carries out the reaction (2R)-2-phosphoglycerate = (2R)-3-phosphoglycerate. It functions in the pathway carbohydrate degradation; glycolysis; pyruvate from D-glyceraldehyde 3-phosphate: step 3/5. Its function is as follows. Catalyzes the interconversion of 2-phosphoglycerate and 3-phosphoglycerate. The polypeptide is 2,3-bisphosphoglycerate-dependent phosphoglycerate mutase (Staphylococcus epidermidis (strain ATCC 35984 / DSM 28319 / BCRC 17069 / CCUG 31568 / BM 3577 / RP62A)).